The sequence spans 436 residues: Ribosomal protein uS12 methylthiotransferase RimO (436 aa).

Residues 4–122 (KRIDIITLGC…LLQDLGKTYH (119 aa)) form the MTTase N-terminal domain. [4Fe-4S] cluster-binding residues include cysteine 13, cysteine 51, cysteine 85, cysteine 146, cysteine 150, and cysteine 153. The Radical SAM core domain occupies 132 to 363 (TTPKHYAYLK…MDIQQGISAE (232 aa)). The TRAM domain maps to 366–433 (AAKIGQQMKV…DFDLYAKILN (68 aa)).

Belongs to the methylthiotransferase family. RimO subfamily. Requires [4Fe-4S] cluster as cofactor.

It localises to the cytoplasm. It catalyses the reaction L-aspartate(89)-[ribosomal protein uS12]-hydrogen + (sulfur carrier)-SH + AH2 + 2 S-adenosyl-L-methionine = 3-methylsulfanyl-L-aspartate(89)-[ribosomal protein uS12]-hydrogen + (sulfur carrier)-H + 5'-deoxyadenosine + L-methionine + A + S-adenosyl-L-homocysteine + 2 H(+). Functionally, catalyzes the methylthiolation of an aspartic acid residue of ribosomal protein uS12. The protein is Ribosomal protein uS12 methylthiotransferase RimO of Bacteroides thetaiotaomicron (strain ATCC 29148 / DSM 2079 / JCM 5827 / CCUG 10774 / NCTC 10582 / VPI-5482 / E50).